Reading from the N-terminus, the 142-residue chain is Lutropin subunit beta (142 aa).

Positions 1 to 21 (MEMLQGLLLLWLLLNVGGVWT) are cleaved as a signal peptide. 6 disulfides stabilise this stretch: C30–C78, C44–C93, C47–C131, C55–C109, C59–C111, and C114–C121. A glycan (N-linked (GlcNAc...) asparagine) is linked at N34.

Belongs to the glycoprotein hormones subunit beta family. In terms of assembly, heterodimer of a common alpha chain and a unique beta chain which confers biological specificity to thyrotropin, lutropin, follitropin and gonadotropin.

It localises to the secreted. In terms of biological role, promotes spermatogenesis and ovulation by stimulating the testes and ovaries to synthesize steroids. The sequence is that of Lutropin subunit beta (LHB) from Panthera tigris altaica (Siberian tiger).